The primary structure comprises 387 residues: Mannitol-1-phosphate 5-dehydrogenase (387 aa).

Residue 3–14 coordinates NAD(+); it reads ALHFGAGNIGRG.

It belongs to the mannitol dehydrogenase family.

The enzyme catalyses D-mannitol 1-phosphate + NAD(+) = beta-D-fructose 6-phosphate + NADH + H(+). The chain is Mannitol-1-phosphate 5-dehydrogenase from Yersinia pseudotuberculosis serotype O:1b (strain IP 31758).